The chain runs to 430 residues: Enolase (430 aa).

Gln-163 is a (2R)-2-phosphoglycerate binding site. Glu-205 functions as the Proton donor in the catalytic mechanism. Residues Asp-242, Glu-287, and Asp-314 each contribute to the Mg(2+) site. Positions 339, 368, 369, and 390 each coordinate (2R)-2-phosphoglycerate. Lys-339 (proton acceptor) is an active-site residue.

The protein belongs to the enolase family. Mg(2+) serves as cofactor.

It is found in the cytoplasm. The protein resides in the secreted. It localises to the cell surface. The catalysed reaction is (2R)-2-phosphoglycerate = phosphoenolpyruvate + H2O. It functions in the pathway carbohydrate degradation; glycolysis; pyruvate from D-glyceraldehyde 3-phosphate: step 4/5. In terms of biological role, catalyzes the reversible conversion of 2-phosphoglycerate (2-PG) into phosphoenolpyruvate (PEP). It is essential for the degradation of carbohydrates via glycolysis. In Exiguobacterium sibiricum (strain DSM 17290 / CCUG 55495 / CIP 109462 / JCM 13490 / 255-15), this protein is Enolase.